The primary structure comprises 152 residues: VQ motif-containing protein 8, chloroplastic (152 aa).

The disordered stretch occupies residues 1–42; the sequence is MIPTRCNEINGSRPSSLKLAGESHTIKKTSSCKSKPRPHGRA. The N-terminal 58 residues, 1–58, are a transit peptide targeting the chloroplast; that stretch reads MIPTRCNEINGSRPSSLKLAGESHTIKKTSSCKSKPRPHGRASPVIIYAHSPKVIHTR. Positions 62–71 match the VQ motif; it reads FMALVQRLTG. The tract at residues 80 to 108 is disordered; it reads TSESSSSVVTEEVNVGDDNTAAPFSQDRT. Over residues 81–92 the composition is skewed to low complexity; the sequence is SESSSSVVTEEV.

The protein resides in the plastid. It localises to the chloroplast. Functionally, may be involved in chloroplast development. This Arabidopsis thaliana (Mouse-ear cress) protein is VQ motif-containing protein 8, chloroplastic.